The primary structure comprises 175 residues: Bcl-2-related protein A1 (175 aa).

This sequence belongs to the Bcl-2 family. In terms of assembly, interacts directly with BCL2L11/BIM, BAK1, BID, BMF and BBC3. Interacts directly with PMAIP1. Interacts with BOP. Interacts with ING4. Interacts with UBQLN4.

Its subcellular location is the cytoplasm. In terms of biological role, retards apoptosis induced by IL-3 deprivation. May function in the response of hemopoietic cells to external signals and in maintaining endothelial survival during infection. Can inhibit apoptosis induced by serum starvation in the mammary epithelial cell line HC11. This chain is Bcl-2-related protein A1 (BCL2A1), found in Bos taurus (Bovine).